We begin with the raw amino-acid sequence, 453 residues long: Chromosomal replication initiator protein DnaA (453 aa).

A domain I, interacts with DnaA modulators region spans residues 1-79 (MKSLIQEKWN…KTAIAEVINQ (79 aa)). The tract at residues 79 to 111 (QDFEIEFVLLSQTKAEEKVQTQAPNKIKNESLS) is domain II. Positions 112–330 (YLNPRYTFDT…GALTKIVALS (219 aa)) are domain III, AAA+ region. 4 residues coordinate ATP: Gly-156, Gly-158, Lys-159, and Thr-160. Residues 331–453 (RLKKKEVDVI…VLIKKINPTP (123 aa)) form a domain IV, binds dsDNA region.

Belongs to the DnaA family. As to quaternary structure, oligomerizes as a right-handed, spiral filament on DNA at oriC.

The protein localises to the cytoplasm. Plays an essential role in the initiation and regulation of chromosomal replication. ATP-DnaA binds to the origin of replication (oriC) to initiate formation of the DNA replication initiation complex once per cell cycle. Binds the DnaA box (a 9 base pair repeat at the origin) and separates the double-stranded (ds)DNA. Forms a right-handed helical filament on oriC DNA; dsDNA binds to the exterior of the filament while single-stranded (ss)DNA is stabiized in the filament's interior. The ATP-DnaA-oriC complex binds and stabilizes one strand of the AT-rich DNA unwinding element (DUE), permitting loading of DNA polymerase. After initiation quickly degrades to an ADP-DnaA complex that is not apt for DNA replication. Binds acidic phospholipids. The protein is Chromosomal replication initiator protein DnaA of Lachnoclostridium phytofermentans (strain ATCC 700394 / DSM 18823 / ISDg) (Clostridium phytofermentans).